Reading from the N-terminus, the 261-residue chain is Chitinase 8 (261 aa).

Positions 1–29 are cleaved as a signal peptide; sequence MTTTTTRFVQLAACAAASLLAVAASGAAA. Disulfide bonds link Cys-53–Cys-115 and Cys-221–Cys-253. The Proton donor role is filled by Glu-98.

Belongs to the glycosyl hydrolase 19 family. Chitinase class II subfamily. In terms of tissue distribution, expressed in roots, leaves, sheaths and meristems.

The enzyme catalyses Random endo-hydrolysis of N-acetyl-beta-D-glucosaminide (1-&gt;4)-beta-linkages in chitin and chitodextrins.. This chain is Chitinase 8 (Cht8), found in Oryza sativa subsp. japonica (Rice).